Here is a 305-residue protein sequence, read N- to C-terminus: MDLSGVKKKSLLGVKENNKKSSTRAPSPTKRKDRSDEKSKDRSKDKGATKESSEKDRGRDKTRKRRSASSGSSSTRSRSSSTSSSGSSTSTGSSSGSSSSSASSRSGSSSTSRSSSSSSSSGSPSPSRRRHDNRRRSRSKSKPPKRDEKERKRRSPSPKPTKVHIGRLTRNVTKDHIMEIFSTYGKIKMIDMPVERMHPHLSKGYAYVEFENPDEAEKALKHMDGGQIDGQEITATAVLAPWPRPPPRRFSPPRRMLPPLPMWRRSPPRMRRRSRSPRRRSPARRRSRSPGRRRHRSRSSSNSSR.

Basic residues predominate over residues 1 to 10; it reads MDLSGVKKKS. Residues 1-161 form a necessary for interaction with SRP54, nuclear localization and exon-skipping region; sequence MDLSGVKKKS…KRRSPSPKPT (161 aa). The interval 1–170 is disordered; it reads MDLSGVKKKS…TKVHIGRLTR (170 aa). The tract at residues 1 to 220 is necessary for interaction with the cleaved p110 isoform of CDC2L1; it reads MDLSGVKKKS…ENPDEAEKAL (220 aa). Residues Lys7 and Lys15 each participate in a glycyl lysine isopeptide (Lys-Gly) (interchain with G-Cter in SUMO2) cross-link. Basic and acidic residues predominate over residues 33–59; sequence DRSDEKSKDRSKDKGATKESSEKDRGR. A Phosphoserine modification is found at Ser53. Low complexity predominate over residues 68–126; the sequence is ASSGSSSTRSRSSSTSSSGSSTSTGSSSGSSSSSASSRSGSSSTSRSSSSSSSSGSPSP. The tract at residues 69 to 121 is necessary for interactions with UPF2 and UPF3B and UPF2-dependent NMD; sequence SSGSSSTRSRSSSTSSSGSSTSTGSSSGSSSSSASSRSGSSSTSRSSSSSSSS. 2 stretches are compositionally biased toward basic residues: residues 127-143 and 151-167; these read SRRR…KSKP and RKRR…HIGR. Phosphoserine occurs at positions 155 and 157. Residues 156–242 are necessary for interaction with PNN and exon-skipping; sequence PSPKPTKVHI…ITATAVLAPW (87 aa). The tract at residues 159-244 is interaction with SAP18 and ACIN1; it reads KPTKVHIGRL…ATAVLAPWPR (86 aa). Residue Thr161 is modified to Phosphothreonine. In terms of domain architecture, RRM spans 161–240; sequence TKVHIGRLTR…QEITATAVLA (80 aa). Position 218 is an N6-acetyllysine (Lys218). A necessary for interaction with TRA2B, nuclear localization and exon-skipping region spans residues 238 to 305; it reads VLAPWPRPPP…RSRSSSNSSR (68 aa). Residues 240–305 form a disordered region; sequence APWPRPPPRR…RSRSSSNSSR (66 aa). Residues 242–261 show a composition bias toward pro residues; the sequence is WPRPPPRRFSPPRRMLPPLP. Residues 266-298 show a composition bias toward basic residues; the sequence is SPPRMRRRSRSPRRRSPARRRSRSPGRRRHRSR.

Belongs to the splicing factor SR family. In terms of assembly, found in mRNA splicing-dependent exon junction complexes (EJC). Found in a post-splicing complex with NXF1, RBM8A, UPF1, UPF2, UPF3A, UPF3B and RNPS1. Component of the heterotrimeric ASAP (apoptosis- and splicing-associated protein) and PSAP complexes consisting of RNPS1, SAP18 and either ACIN1 or PNN, respectively; the ASAP and PSAP complexes probably are formed mutually exclusive. Component of the active spliceosome. Associates with polysomes. Interacts with the cleaved p110 isoform of CDC2L1, CSNK2A1, PNN, SART3, SRP54, SRRM1 and TRA2B/SFRS10. Post-translationally, phosphorylated on one or more of the four Ser/Thr residues (Ser-43, Thr-49, Ser-52 or Ser-53). Ser-53 phosphorylation site is important for splicing and translation stimulation activity in vitro.

The protein localises to the nucleus. It is found in the nucleus speckle. Its subcellular location is the cytoplasm. Functionally, part of pre- and post-splicing multiprotein mRNP complexes. Auxiliary component of the splicing-dependent multiprotein exon junction complex (EJC) deposited at splice junction on mRNAs. The EJC is a dynamic structure consisting of core proteins and several peripheral nuclear and cytoplasmic associated factors that join the complex only transiently either during EJC assembly or during subsequent mRNA metabolism. Component of the ASAP and PSAP complexes which bind RNA in a sequence-independent manner and are proposed to be recruited to the EJC prior to or during the splicing process and to regulate specific excision of introns in specific transcription subsets. The ASAP complex can inhibit RNA processing during in vitro splicing reactions. The ASAP complex promotes apoptosis and is disassembled after induction of apoptosis. Enhances the formation of the ATP-dependent A complex of the spliceosome. Involved in both constitutive splicing and, in association with SRP54 and TRA2B/SFRS10, in distinctive modulation of alternative splicing in a substrate-dependent manner. Involved in the splicing modulation of BCL2L1/Bcl-X (and probably other apoptotic genes); specifically inhibits formation of proapoptotic isoforms such as Bcl-X(S); the activity is different from the established EJC assembly and function. Participates in mRNA 3'-end cleavage. Involved in UPF2-dependent nonsense-mediated decay (NMD) of mRNAs containing premature stop codons. Also mediates increase of mRNA abundance and translational efficiency. Binds spliced mRNA 20-25 nt upstream of exon-exon junctions. The sequence is that of RNA-binding protein with serine-rich domain 1 (RNPS1) from Bos taurus (Bovine).